A 154-amino-acid polypeptide reads, in one-letter code: Endoribonuclease YbeY (154 aa).

Zn(2+) contacts are provided by His114, His118, and His124.

The protein belongs to the endoribonuclease YbeY family. Requires Zn(2+) as cofactor.

It localises to the cytoplasm. Single strand-specific metallo-endoribonuclease involved in late-stage 70S ribosome quality control and in maturation of the 3' terminus of the 16S rRNA. The chain is Endoribonuclease YbeY from Histophilus somni (strain 2336) (Haemophilus somnus).